A 342-amino-acid polypeptide reads, in one-letter code: MKQDVVELDGAIGGGQVLRSALSLSMLTGKTLRIHNIRARRSRPGLLRQHLTAVLAAAQVCGARSTGAELGSQVLSFEPGPIRGGDYRFAIGTAGSCTLVLQTLLPALLRAPQPSRVSISGGTHNPLAPPVDFLQQAWLPQLRRMGGRVELQLLRHGFVPAGGGELEAFIQPSELQPLHLQERGALLGSRAWALSAGLPEHVAERELRRVHDRLQLPREQLTPVLLDEEYGPGNVLLLEFAFEHLTELFCGFGQNSLRAEKVADGAIDQARDWLDSGAAVAEHLADQLLLPMALAGGGSFTTPCMTEHLQSNIRVIEAFLPVRIEARPLSEQVLQVQCHALS.

ATP is bound by residues Gln-102 and 283-287 (HLADQ). Residue His-308 is the Tele-AMP-histidine intermediate of the active site.

The protein belongs to the RNA 3'-terminal cyclase family. Type 1 subfamily.

It is found in the cytoplasm. The enzyme catalyses a 3'-end 3'-phospho-ribonucleotide-RNA + ATP = a 3'-end 2',3'-cyclophospho-ribonucleotide-RNA + AMP + diphosphate. Functionally, catalyzes the conversion of 3'-phosphate to a 2',3'-cyclic phosphodiester at the end of RNA. The mechanism of action of the enzyme occurs in 3 steps: (A) adenylation of the enzyme by ATP; (B) transfer of adenylate to an RNA-N3'P to produce RNA-N3'PP5'A; (C) and attack of the adjacent 2'-hydroxyl on the 3'-phosphorus in the diester linkage to produce the cyclic end product. The biological role of this enzyme is unknown but it is likely to function in some aspects of cellular RNA processing. This Pseudomonas fluorescens (strain ATCC BAA-477 / NRRL B-23932 / Pf-5) protein is RNA 3'-terminal phosphate cyclase.